A 389-amino-acid polypeptide reads, in one-letter code: Chalcone synthase E (389 aa).

Cys164 is a catalytic residue.

It belongs to the thiolase-like superfamily. Chalcone/stilbene synthases family.

It carries out the reaction (E)-4-coumaroyl-CoA + 3 malonyl-CoA + 3 H(+) = 2',4,4',6'-tetrahydroxychalcone + 3 CO2 + 4 CoA. The protein operates within secondary metabolite biosynthesis; flavonoid biosynthesis. In terms of biological role, the primary product of this enzyme is 4,2',4',6'-tetrahydroxychalcone (also termed naringenin-chalcone or chalcone) which can under specific conditions spontaneously isomerize into naringenin. This Ipomoea nil (Japanese morning glory) protein is Chalcone synthase E (CHSE).